Consider the following 353-residue polypeptide: Photosystem II D2 protein (353 aa).

T2 bears the N-acetylthreonine mark. T2 bears the Phosphothreonine mark. The chain crosses the membrane as a helical span at residues 41-61; the sequence is CAYFALGGWFTGTTFVTSWYT. A chlorophyll a-binding site is contributed by H118. Residues 125 to 141 traverse the membrane as a helical segment; sequence GFMLRQFELARSVQLRP. Pheophytin a is bound by residues Q130 and N143. The chain crosses the membrane as a helical span at residues 153 to 166; it reads VFVSVFLIYPLGQS. H198 is a binding site for chlorophyll a. Residues 208-228 form a helical membrane-spanning segment; the sequence is AALLCAIHGATVENTLFEDGD. A plastoquinone-binding residues include H215 and F262. H215 provides a ligand contact to Fe cation. Residue H269 participates in Fe cation binding. A helical transmembrane segment spans residues 279–295; sequence GLWMSAIGVVGLALNLR.

Belongs to the reaction center PufL/M/PsbA/D family. As to quaternary structure, PSII is composed of 1 copy each of membrane proteins PsbA, PsbB, PsbC, PsbD, PsbE, PsbF, PsbH, PsbI, PsbJ, PsbK, PsbL, PsbM, PsbT, PsbX, PsbY, PsbZ, Psb30/Ycf12, at least 3 peripheral proteins of the oxygen-evolving complex and a large number of cofactors. It forms dimeric complexes. Requires The D1/D2 heterodimer binds P680, chlorophylls that are the primary electron donor of PSII, and subsequent electron acceptors. It shares a non-heme iron and each subunit binds pheophytin, quinone, additional chlorophylls, carotenoids and lipids. There is also a Cl(-1) ion associated with D1 and D2, which is required for oxygen evolution. The PSII complex binds additional chlorophylls, carotenoids and specific lipids. as cofactor.

The protein localises to the plastid. The protein resides in the chloroplast thylakoid membrane. The catalysed reaction is 2 a plastoquinone + 4 hnu + 2 H2O = 2 a plastoquinol + O2. In terms of biological role, photosystem II (PSII) is a light-driven water:plastoquinone oxidoreductase that uses light energy to abstract electrons from H(2)O, generating O(2) and a proton gradient subsequently used for ATP formation. It consists of a core antenna complex that captures photons, and an electron transfer chain that converts photonic excitation into a charge separation. The D1/D2 (PsbA/PsbD) reaction center heterodimer binds P680, the primary electron donor of PSII as well as several subsequent electron acceptors. D2 is needed for assembly of a stable PSII complex. This chain is Photosystem II D2 protein, found in Oryza nivara (Indian wild rice).